Consider the following 116-residue polypeptide: MSNHKLIEAVTKSQLRTDLPTFRSGDTLRVHVRIVEGSRERIQVFEGVVIKRRGGGISETFTVRKISSGVGVERTFPLHTPKIEKIEVKRRGKVRRAKLYYLRSLRGKAARIQEIR.

It belongs to the bacterial ribosomal protein bL19 family.

Its function is as follows. This protein is located at the 30S-50S ribosomal subunit interface and may play a role in the structure and function of the aminoacyl-tRNA binding site. This chain is Large ribosomal subunit protein bL19, found in Staphylococcus epidermidis (strain ATCC 35984 / DSM 28319 / BCRC 17069 / CCUG 31568 / BM 3577 / RP62A).